Consider the following 159-residue polypeptide: Transcriptional repressor NrdR (159 aa).

The segment at 1–21 (MRCPKCQHNKSNVIDSRQAED) is disordered. The segment at 3-34 (CPKCQHNKSNVIDSRQAEDGNTIRRRRECDAC) is a zinc-finger region. An ATP-cone domain is found at 49 to 139 (LLVVKKDGTR…VYRSFKDVDE (91 aa)).

The protein belongs to the NrdR family. Requires Zn(2+) as cofactor.

Its function is as follows. Negatively regulates transcription of bacterial ribonucleotide reductase nrd genes and operons by binding to NrdR-boxes. The protein is Transcriptional repressor NrdR of Streptococcus thermophilus (strain ATCC BAA-491 / LMD-9).